Here is a 512-residue protein sequence, read N- to C-terminus: Gasdermin-E (512 aa).

The tract at residues 1–56 (MFAKATRNFLKEVDAGGDLISVSHLNDSDKLQLLSLVTKKKRYWCWQRPKYQILSA) is membrane targeting domain. Cys-45 bears the S-(2-succinyl)cysteine mark. Lys-120 participates in a covalent cross-link: Glycyl lysine isopeptide (Lys-Gly) (interchain with G-Cter in ubiquitin). 3 positions are modified to S-(2-succinyl)cysteine: Cys-156, Cys-168, and Cys-180. Residue Lys-189 forms a Glycyl lysine isopeptide (Lys-Gly) (interchain with G-Cter in ubiquitin) linkage. Cys-235, Cys-411, and Cys-420 each carry S-(2-succinyl)cysteine.

It belongs to the gasdermin family. In terms of assembly, homooligomer; homooligomeric ring-shaped pore complex containing 27-28 subunits when inserted in the membrane. Cleavage at Asp-270 by CASP3 (mature and uncleaved precursor forms) or granzyme B (GZMB) relieves autoinhibition and is sufficient to initiate pyroptosis. In terms of processing, succination by the Krebs cycle intermediate fumarate, which leads to S-(2-succinyl)cysteine residues, inhibits processing by caspases, and ability to initiate pyroptosis. Succination modification is catalyzed by a non-enzymatic reaction caused by an accumulation of fumarate. Post-translationally, ubiquitinated on Lys-120 and Lys-189 via 'Lys-48'-linked polyubiquitin chains, leading to proteasomal degradation. Deubiquitinated by USP48, leading to increased stability. Palmitoylated. In terms of tissue distribution, expressed in spleen, kidney, large and small intestine, testicle, stomach and by CD4(+)CD(8+) T cells in thymus. Expressed by macrophages.

It localises to the cell membrane. Its subcellular location is the cytoplasm. The protein localises to the cytosol. The full-length protein before cleavage is inactive: intramolecular interactions between N- and C-terminal domains mediate autoinhibition in the absence of activation signal. The intrinsic pyroptosis-inducing activity is carried by the released N-terminal moiety (Gasdermin-E, N-terminal) following cleavage by CASP3 or granzyme B (GZMB). Activated by NLRP1 in the absence of GSDMD expression: NLRP1 cleaves and activates CASP8, promoting downstream activation of CASP3 and subsequent activation of GSDME. Precursor of a pore-forming protein that converts non-inflammatory apoptosis to pyroptosis. This form constitutes the precursor of the pore-forming protein: upon cleavage, the released N-terminal moiety (Gasdermin-E, N-terminal) binds to membranes and forms pores, triggering pyroptosis. Functionally, pore-forming protein produced by cleavage by CASP3 or granzyme B (GZMB), which converts non-inflammatory apoptosis to pyroptosis or promotes granzyme-mediated pyroptosis, respectively. After cleavage, moves to the plasma membrane, homooligomerizes within the membrane and forms pores of 10-15 nanometers (nm) of inner diameter, allowing the release of mature interleukins (IL1B and IL16) and triggering pyroptosis. Binds to inner leaflet lipids, bisphosphorylated phosphatidylinositols, such as phosphatidylinositol (4,5)-bisphosphate. Cleavage by CASP3 switches CASP3-mediated apoptosis induced by TNF or danger signals, such as chemotherapy drugs, to pyroptosis. Mediates secondary necrosis downstream of the mitochondrial apoptotic pathway and CASP3 activation as well as in response to viral agents. Exhibits bactericidal activity. Cleavage by GZMB promotes tumor suppressor activity by triggering robust anti-tumor immunity. Suppresses tumors by mediating granzyme-mediated pyroptosis in target cells of natural killer (NK) cells: cleavage by granzyme B (GZMB), delivered to target cells from NK-cells, triggers pyroptosis of tumor cells and tumor suppression. May play a role in the p53/TP53-regulated cellular response to DNA damage. The chain is Gasdermin-E from Mus musculus (Mouse).